Consider the following 334-residue polypeptide: DCN1-like protein 3 (334 aa).

The DCUN1 domain maps to 112–301; sequence VSHQTLSKLF…LFDDFVDYEK (190 aa). The segment at 308–334 is disordered; it reads SGIHDDDNNNDDPLQSHVKAEDPGLVS. Over residues 325–334 the composition is skewed to basic and acidic residues; sequence VKAEDPGLVS.

The protein resides in the cell membrane. Its function is as follows. Promotes neddylation of cullin components of SCF-type E3 ubiquitin ligase complexes and thus regulates SCF-type complex activity. Function promotes cell proliferation. The sequence is that of DCN1-like protein 3 from Drosophila melanogaster (Fruit fly).